We begin with the raw amino-acid sequence, 142 residues long: Hemoglobin subunit alpha (142 aa).

In terms of domain architecture, Globin spans 2-142; the sequence is VLSSADKNNV…VSTVLTSKYR (141 aa). Ser4 is subject to Phosphoserine. Lys8 and Lys12 each carry N6-succinyllysine. Lys17 is subject to N6-acetyllysine; alternate. Lys17 carries the N6-succinyllysine; alternate modification. Tyr25 carries the phosphotyrosine modification. Position 36 is a phosphoserine (Ser36). Lys41 carries the N6-succinyllysine modification. Phosphoserine is present on Ser50. Residue His59 participates in O2 binding. Heme b is bound at residue His88. Ser103 bears the Phosphoserine mark. The residue at position 109 (Thr109) is a Phosphothreonine. Phosphoserine is present on Ser125. Residues Thr135 and Thr138 each carry the phosphothreonine modification. The residue at position 139 (Ser139) is a Phosphoserine.

The protein belongs to the globin family. In terms of assembly, heterotetramer of two alpha chains and two beta chains. In terms of tissue distribution, red blood cells.

Functionally, involved in oxygen transport from the lung to the various peripheral tissues. In terms of biological role, hemopressin acts as an antagonist peptide of the cannabinoid receptor CNR1. Hemopressin-binding efficiently blocks cannabinoid receptor CNR1 and subsequent signaling. This chain is Hemoglobin subunit alpha (HBA), found in Panthera onca (Jaguar).